A 427-amino-acid chain; its full sequence is MNKSERLYEQAKTLIPGGVNSPVRAFTGVGGTPLFIERADGAHLYDADGKAYIDYVGSWGPMILGHNHPVIRDAVIAAVGRGLSFGAPTEMEVRMAELVTSLIDSMDMVRMVNSGTEATMSAIRLARGFTGRDKLIKFEGCYHGHADHLLVKAGSGALTLGQPNSPGVPADFAKHTLTCSYNDLDSVRAAFARYPQEIACIIVEPVAGNMNCIPPQPGFLQGLRELCDQYGALLIIDEVMTGFRVALGGAQEYYDVTPDLTCLGKIIGGGMPVGAFGGRREVMEALAPTGPIYQAGTLSGNPVAMAAGYACLNEINQPGIYPQLAELTDNLAEGLLAAAREEKIPLVVNHVGGMFGIFFTDQPSVTCYQDVLRCDAERFKRFFHLMLEQGIYLAPSAFEAGFMSLAHSQEDIQKTIDAARCSFAKLK.

Lys265 is subject to N6-(pyridoxal phosphate)lysine.

This sequence belongs to the class-III pyridoxal-phosphate-dependent aminotransferase family. HemL subfamily. Homodimer. It depends on pyridoxal 5'-phosphate as a cofactor.

The protein localises to the cytoplasm. The enzyme catalyses (S)-4-amino-5-oxopentanoate = 5-aminolevulinate. It functions in the pathway porphyrin-containing compound metabolism; protoporphyrin-IX biosynthesis; 5-aminolevulinate from L-glutamyl-tRNA(Glu): step 2/2. In Edwardsiella ictaluri (strain 93-146), this protein is Glutamate-1-semialdehyde 2,1-aminomutase.